We begin with the raw amino-acid sequence, 244 residues long: MKFIKAKGIVLKDVNFEESSKILTIFTSELGKIQALSKNCRRTLSPLGAVSQPLIYSEFVFTKTKEIYSISSASVIESFFDITQNVDLTIYSSYLIELVDSFIQIEQKNEDILRLLLNSLYMLKKGADPETVCRIFEIKMLIFTGFFPQFTQCVKCQKSNLSRIFFSFKNAGVVCAECKEENDMEISLEVVEKILIIAATDLKKLSKIRISKNLNNVLKTLMTTYIKLVLQKDVKILDFFKFIK.

This sequence belongs to the RecO family.

Its function is as follows. Involved in DNA repair and RecF pathway recombination. In Caldicellulosiruptor saccharolyticus (strain ATCC 43494 / DSM 8903 / Tp8T 6331), this protein is DNA repair protein RecO.